The following is a 154-amino-acid chain: uncharacterized protein (154 aa).

Positions 1–33 are cleaved as a signal peptide; that stretch reads MTKRGIQAFAGGIILATAVLAAVFYLTDEDQAA.

This is an uncharacterized protein from Bacillus subtilis (strain 168).